Consider the following 475-residue polypeptide: Coagulation factor X (475 aa).

The signal sequence occupies residues 1 to 20 (MAGRLLLLLLCAALPDELRA). Residues 21 to 40 (EGGVFIKKESADKFLERTKR) constitute a propeptide that is removed on maturation. The region spanning 41–85 (ANSFLEEMKQGNIERECNEERCSKEEAREAFEDNEKTEEFWNIYV) is the Gla domain. E46, E47, E54, E56, E59, E60, E65, E66, E69, E72, and E79 each carry 4-carboxyglutamate. C57 and C62 are disulfide-bonded. The 37-residue stretch at 86–122 (DGDQCSSNPCHYGGQCKDGLGSYTCSCLDGYQGKNCE) folds into the EGF-like 1; calcium-binding domain. Disulfide bonds link C90/C101, C95/C110, C112/C121, C129/C140, C136/C152, C154/C167, C175/C348, C247/C252, C267/C283, C396/C410, and C421/C449. A (3R)-3-hydroxyaspartate modification is found at D103. Residues 125–168 (IPKYCKINNGDCEQFCSIKKSVQKDVVCSCTSGYELAEDGKQCV) form the EGF-like 2 domain. Residues 186 to 240 (SVILPTNSNTNATSDQDVPSTNGSILEEVFTTTTESPTPPPRNGSSITDPNVDTR) constitute a propeptide, activation peptide. N196, N207, and N228 each carry an N-linked (GlcNAc...) asparagine glycan. The segment at 216–237 (TTTTESPTPPPRNGSSITDPNV) is disordered. Positions 241–473 (IVGGDECRPG…FLRWVRTVMR (233 aa)) constitute a Peptidase S1 domain. H282 serves as the catalytic Charge relay system. N285 carries N-linked (GlcNAc...) asparagine glycosylation. The active-site Charge relay system is the D328. Catalysis depends on S425, which acts as the Charge relay system.

The protein belongs to the peptidase S1 family. In terms of assembly, the two chains are formed from a single-chain precursor by the excision of two Arg residues and are held together by 1 or more disulfide bonds. The vitamin K-dependent, enzymatic carboxylation of some glutamate residues allows the modified protein to bind calcium. In terms of processing, the activation peptide is cleaved by factor IXa (in the intrinsic pathway), or by factor VIIa (in the extrinsic pathway). Post-translationally, the iron and 2-oxoglutarate dependent 3-hydroxylation of aspartate and asparagine is (R) stereospecific within EGF domains. In terms of tissue distribution, liver and chorioallantoic membrane.

The protein localises to the secreted. The enzyme catalyses Selective cleavage of Arg-|-Thr and then Arg-|-Ile bonds in prothrombin to form thrombin.. In terms of biological role, factor Xa is a vitamin K-dependent glycoprotein that converts prothrombin to thrombin in the presence of factor Va, calcium and phospholipid during blood clotting. VAP cleaves the fusion proteins of Sendai virus, NDV, and influenza virus a at a specific single arginine-containing site, and plays a key role in the viral spreading in the allantoic sac. This chain is Coagulation factor X (F10), found in Gallus gallus (Chicken).